An 876-amino-acid polypeptide reads, in one-letter code: Neurotrypsin (876 aa).

The signal sequence occupies residues 1–20 (MTLARFVLALMLGALPEVVG). Asn-26 carries an N-linked (GlcNAc...) asparagine glycan. The tract at residues 29 to 89 (LHHSHRHSPP…ALQAGHTPRP (61 aa)) is disordered. Over residues 43–54 (YPSYYLPTQQRP) the composition is skewed to low complexity. Positions 57–72 (TRPPPPLPRFPRPPRA) are enriched in pro residues. Positions 94-166 (CPAGEPWVSV…GKVDWGYCDC (73 aa)) constitute a Kringle domain. 20 disulfide bridges follow: Cys-94–Cys-166, Cys-110–Cys-150, Cys-139–Cys-164, Cys-196–Cys-260, Cys-209–Cys-270, Cys-240–Cys-250, Cys-306–Cys-370, Cys-319–Cys-380, Cys-350–Cys-360, Cys-413–Cys-476, Cys-426–Cys-486, Cys-456–Cys-466, Cys-526–Cys-590, Cys-539–Cys-600, Cys-570–Cys-580, Cys-620–Cys-751, Cys-662–Cys-678, Cys-766–Cys-832, Cys-795–Cys-809, and Cys-822–Cys-851. 4 consecutive SRCR domains span residues 171–272 (VRLR…TCSF), 281–382 (IRLA…SCTP), 388–488 (IRLA…ACYP), and 501–602 (VRLM…ICDY). A zymogen activation region region spans residues 620-631 (CGLRLLHRRQKR). Residues 632 to 875 (IIGGKNSLRG…FVPWIKSVTK (244 aa)) enclose the Peptidase S1 domain. Residue His-677 is the Charge relay system of the active site. N-linked (GlcNAc...) asparagine glycosylation occurs at Asn-684. Asp-727 functions as the Charge relay system in the catalytic mechanism. Ser-826 functions as the Charge relay system in the catalytic mechanism.

Belongs to the peptidase S1 family.

The protein resides in the secreted. In terms of biological role, plays a role in neuronal plasticity and the proteolytic action may subserve structural reorganizations associated with learning and memory operations. In Gorilla gorilla gorilla (Western lowland gorilla), this protein is Neurotrypsin (PRSS12).